The chain runs to 337 residues: MEESRVRQLPKIELHCHLDGSIRPTTLRTIAEKQNIPLPQDEQALKELVVAPEKCTDLNDYLTRFDFVLTCLQTAEALQAAAYDVISQAAEDGVAYIEVRFAPSQHTEKGLRLPEIVTAVLTGLKQGEEDFGVKSNALLCGMRHDQQQAIEKIVHLAHDFRETGVVGFDLAGNEVDFPPYTFEDVLALANQLSIPLTLHAGECGCGKNVADAVTLGATRIGHGIALKDTPEYLALLKEKKVLLEMCPTSNFQTGTVKTLAEYPFQQFIEAGLAVCINTDNRTVSDTTLTKEFMKLATWYQLSYDEMKQLTKNALAGAFLSPDEKKLLNQKIDQAYLF.

His15 and His17 together coordinate Zn(2+). Substrate-binding residues include His17, Asp19, and Gly172. A Zn(2+)-binding site is contributed by His199. The Proton donor role is filled by Glu202. Asp279 serves as a coordination point for Zn(2+).

It belongs to the metallo-dependent hydrolases superfamily. Adenosine and AMP deaminases family. Adenosine deaminase subfamily. The cofactor is Zn(2+).

The enzyme catalyses adenosine + H2O + H(+) = inosine + NH4(+). It catalyses the reaction 2'-deoxyadenosine + H2O + H(+) = 2'-deoxyinosine + NH4(+). Functionally, catalyzes the hydrolytic deamination of adenosine and 2-deoxyadenosine. The sequence is that of Adenosine deaminase from Enterococcus faecalis (strain ATCC 700802 / V583).